The following is a 117-amino-acid chain: Large ribosomal subunit protein bL20c (117 aa).

This sequence belongs to the bacterial ribosomal protein bL20 family.

The protein resides in the plastid. Its subcellular location is the chloroplast. Functionally, binds directly to 23S ribosomal RNA and is necessary for the in vitro assembly process of the 50S ribosomal subunit. It is not involved in the protein synthesizing functions of that subunit. The polypeptide is Large ribosomal subunit protein bL20c (Carica papaya (Papaya)).